A 153-amino-acid polypeptide reads, in one-letter code: Membrane protein FAM174B (153 aa).

A signal peptide spans 1–27; it reads MSALPPQPPPPLLLLLLALLAAPAALA. The Extracellular segment spans residues 28-84; the sequence is RRAESASASQPEAEHQPPPGPGNATQLGSGMAGGGSSNSSVDAVVTRISSLLRDLPT. Residues 31–67 are disordered; that stretch reads ESASASQPEAEHQPPPGPGNATQLGSGMAGGGSSNSS. An N-linked (GlcNAc...) asparagine glycan is attached at Asn-50. A helical transmembrane segment spans residues 85–105; it reads LKATVIVACAFSALLIACLLL. At 106 to 153 the chain is on the cytoplasmic side; that stretch reads RVFRLGKRLKKTRKYDIITTPAERVEMAPLNEEDDEDEDSTVFDIKYR.

It belongs to the FAM174 family.

The protein localises to the cell membrane. It is found in the golgi apparatus. In terms of biological role, essential for Golgi structural integrity. The polypeptide is Membrane protein FAM174B (Fam174b) (Mus musculus (Mouse)).